Here is a 31-residue protein sequence, read N- to C-terminus: Nemertide alpha-4 (31 aa).

3 disulfide bridges follow: Cys2/Cys16, Cys9/Cys20, and Cys15/Cys26. 4-hydroxyproline is present on residues Pro28 and Pro29.

The protein belongs to the nemertide family. Confined to the epidermis and to the mucus layer.

The protein resides in the secreted. In terms of biological role, potent toxin, demonstrating strong inhibitory effects on insect sodium channels (Nav) and reduced activity on mammalian sodium channels. Potently inhibits inactivation of insect sodium channels of B.germanica (BgNav1) (EC(50)=11.1 nM). Also delays the inactivation of most mammalian Nav (human Nav1.1/SCN1A; EC(50)=92 nM, rat Nav1.2/SCN2A; EC(50)=134.2 nM, rat Nav1.3/SCN3A; EC(50)=12.9 nM, rat Nav1.4/SCN4A; EC(50)=14.6 nM, human Nav1.5/SCN5A; EC(50)=27.8 nM, mouse Nav1.6/SCN8A; EC(50)=123.6 nM, human Nav1.9/SCN9A; EC(50)=80.5 nM). Inactivation is completely prevented by a concentration of 1 uM, resulting in sustained, non-inactivating currents. In addition, the toxin significantly enhances the recovery from inactivation, and the open state is not required for the toxin to interact with the channel. In vivo, injection into brine shrimp (Artemia salina) stops movement or causes death after 24 hours (EC(50)=0.4 uM). This is Nemertide alpha-4 from Lineus sanguineus (Ribbon worm).